Reading from the N-terminus, the 226-residue chain is Protein YAE1 homolog (226 aa).

Positions 45 to 85 are deca-GX3 motif; required for interaction with LTO1; it reads GYRDGIDAGKAVTLQQGFNQGYKKGAEVILNYGRLRGTLSA.

Forms a complex with LTO1.

The protein resides in the cytoplasm. It is found in the nucleus. The complex LTO1:YAE1 functions as a target specific adapter that probably recruits apo-ABCE1 to the cytosolic iron-sulfur protein assembly (CIA) complex machinery. May be required for biogenesis of the large ribosomal subunit and initiation of translation. The sequence is that of Protein YAE1 homolog from Homo sapiens (Human).